A 112-amino-acid chain; its full sequence is Peptidyl-tRNA hydrolase (112 aa).

The protein belongs to the PTH2 family.

It localises to the cytoplasm. The enzyme catalyses an N-acyl-L-alpha-aminoacyl-tRNA + H2O = an N-acyl-L-amino acid + a tRNA + H(+). The natural substrate for this enzyme may be peptidyl-tRNAs which drop off the ribosome during protein synthesis. The protein is Peptidyl-tRNA hydrolase of Haloquadratum walsbyi (strain DSM 16790 / HBSQ001).